A 150-amino-acid polypeptide reads, in one-letter code: Endoribonuclease YbeY (150 aa).

Zn(2+) is bound by residues histidine 113, histidine 117, and histidine 123.

Belongs to the endoribonuclease YbeY family. It depends on Zn(2+) as a cofactor.

Its subcellular location is the cytoplasm. Single strand-specific metallo-endoribonuclease involved in late-stage 70S ribosome quality control and in maturation of the 3' terminus of the 16S rRNA. In Wolbachia sp. subsp. Drosophila simulans (strain wRi), this protein is Endoribonuclease YbeY.